The following is a 142-amino-acid chain: Large ribosomal subunit protein uL13 (142 aa).

Belongs to the universal ribosomal protein uL13 family. Part of the 50S ribosomal subunit.

This protein is one of the early assembly proteins of the 50S ribosomal subunit, although it is not seen to bind rRNA by itself. It is important during the early stages of 50S assembly. The sequence is that of Large ribosomal subunit protein uL13 from Haemophilus influenzae (strain PittGG).